Reading from the N-terminus, the 35-residue chain is Phosphoribulokinase (35 aa).

The protein belongs to the phosphoribulokinase family.

The protein resides in the plastid. Its subcellular location is the chloroplast. It catalyses the reaction D-ribulose 5-phosphate + ATP = D-ribulose 1,5-bisphosphate + ADP + H(+). It functions in the pathway carbohydrate biosynthesis; Calvin cycle. Light regulated via thioredoxin by reversible oxidation/reduction of sulfhydryl/disulfide groups. The protein is Phosphoribulokinase of Pinus pinaster (Maritime pine).